We begin with the raw amino-acid sequence, 546 residues long: uncharacterized protein (546 aa).

Disordered stretches follow at residues 37–101, 269–300, and 392–443; these read KEND…NQKL, QNKA…QPEV, and LSDL…TSAC. 2 stretches are compositionally biased toward basic and acidic residues: residues 81–93 and 274–283; these read DDVK…ENNQ and ADLRKTESHG. Low complexity predominate over residues 284–298; the sequence is THSQSTPPQHSSSQP.

This is an uncharacterized protein from Homo sapiens (Human).